Consider the following 101-residue polypeptide: Large ribosomal subunit protein uL24 (101 aa).

It belongs to the universal ribosomal protein uL24 family. Part of the 50S ribosomal subunit.

Its function is as follows. One of two assembly initiator proteins, it binds directly to the 5'-end of the 23S rRNA, where it nucleates assembly of the 50S subunit. Functionally, one of the proteins that surrounds the polypeptide exit tunnel on the outside of the subunit. The sequence is that of Large ribosomal subunit protein uL24 from Paracoccus denitrificans (strain Pd 1222).